Reading from the N-terminus, the 594-residue chain is Acyl-coenzyme A thioesterase 11 (594 aa).

Residues Met-1–Arg-20 constitute a mitochondrion transit peptide. Ser-15 and Ser-25 each carry phosphoserine. Positions Arg-20–Tyr-43 are disordered. Residues Asn-45–Leu-157 enclose the HotDog ACOT-type 1 domain. CoA is bound by residues Thr-93–Ser-95, Asn-122–Ser-124, Arg-183, and His-272–Arg-274. Positions Glu-217–Asp-330 constitute a HotDog ACOT-type 2 domain. Positions Lys-370–Asp-582 constitute an START domain.

It localises to the mitochondrion matrix. Its subcellular location is the cytoplasm. It catalyses the reaction hexadecanoyl-CoA + H2O = hexadecanoate + CoA + H(+). It carries out the reaction tetradecanoyl-CoA + H2O = tetradecanoate + CoA + H(+). The enzyme catalyses dodecanoyl-CoA + H2O = dodecanoate + CoA + H(+). The catalysed reaction is butanoyl-CoA + H2O = butanoate + CoA + H(+). It functions in the pathway lipid metabolism; fatty acid metabolism. Its function is as follows. Has an acyl-CoA thioesterase activity with a preference for the long chain fatty acyl-CoA thioesters hexadecanoyl-CoA/palmitoyl-CoA and tetradecanoyl-CoA/myristoyl-CoA which are the main substrates in the mitochondrial beta-oxidation pathway. The sequence is that of Acyl-coenzyme A thioesterase 11 (Acot11) from Mus musculus (Mouse).